The primary structure comprises 158 residues: Transcription elongation factor GreA (158 aa).

Residues 5-75 (EKLPMLAEGY…DLEDRVSRAQ (71 aa)) are a coiled coil.

This sequence belongs to the GreA/GreB family.

Its function is as follows. Necessary for efficient RNA polymerase transcription elongation past template-encoded arresting sites. The arresting sites in DNA have the property of trapping a certain fraction of elongating RNA polymerases that pass through, resulting in locked ternary complexes. Cleavage of the nascent transcript by cleavage factors such as GreA or GreB allows the resumption of elongation from the new 3'terminus. GreA releases sequences of 2 to 3 nucleotides. The polypeptide is Transcription elongation factor GreA (Novosphingobium aromaticivorans (strain ATCC 700278 / DSM 12444 / CCUG 56034 / CIP 105152 / NBRC 16084 / F199)).